The chain runs to 78 residues: Small nuclear ribonucleoprotein F (78 aa).

The region spanning 7-78 (NPKPFLQGLI…NVLWVGESTV (72 aa)) is the Sm domain.

This sequence belongs to the snRNP Sm proteins family. SmF/LSm6 subfamily. As to quaternary structure, belongs to the 40S cdc5-associated complex (or cwf complex), a spliceosome sub-complex reminiscent of a late-stage spliceosome composed of the U2, U5 and U6 snRNAs and at least brr2, cdc5, cwf2/prp3, cwf3/syf1, cwf4/syf3, cwf5/ecm2, spp42/cwf6, cwf7/spf27, cwf8, cwf9, cwf10, cwf11, cwf12, prp45/cwf13, cwf14, cwf15, cwf16, cwf17, cwf18, cwf19, cwf20, cwf21, cwf22, cwf23, cwf24, cwf25, cwf26, cyp7/cwf27, cwf28, cwf29/ist3, lea1, msl1, prp5/cwf1, prp10, prp12/sap130, prp17, prp22, sap61, sap62, sap114, sap145, slu7, smb1, smd1, smd3, smf1, smg1 and syf2.

It is found in the nucleus. The protein localises to the cytoplasm. Functionally, plays a role in pre-mRNA splicing as a core component of the spliceosomal U1, U2, U4 and U5 small nuclear ribonucleoproteins (snRNPs), the building blocks of the spliceosome. This Schizosaccharomyces pombe (strain 972 / ATCC 24843) (Fission yeast) protein is Small nuclear ribonucleoprotein F (smf1).